A 545-amino-acid chain; its full sequence is CTP synthase (545 aa).

The amidoligase domain stretch occupies residues 1-266 (MTTNYIFVTG…DDLVCARFGI (266 aa)). Residue Ser14 coordinates CTP. Ser14 lines the UTP pocket. ATP-binding positions include 15–20 (SLGKGI) and Asp72. Mg(2+) is bound by residues Asp72 and Glu140. CTP is bound by residues 147–149 (DIE), 187–192 (KTKPTQ), and Lys223. Residues 187 to 192 (KTKPTQ) and Lys223 each bind UTP. 239–241 (KDV) serves as a coordination point for ATP. The Glutamine amidotransferase type-1 domain maps to 291–542 (TIGMVGKYTE…VKAAGQFQRG (252 aa)). Gly352 contributes to the L-glutamine binding site. Residue Cys379 is the Nucleophile; for glutamine hydrolysis of the active site. Residues 380-383 (LGMQ), Glu403, and Arg470 each bind L-glutamine. Residues His515 and Glu517 contribute to the active site.

Belongs to the CTP synthase family. In terms of assembly, homotetramer.

It carries out the reaction UTP + L-glutamine + ATP + H2O = CTP + L-glutamate + ADP + phosphate + 2 H(+). The catalysed reaction is L-glutamine + H2O = L-glutamate + NH4(+). It catalyses the reaction UTP + NH4(+) + ATP = CTP + ADP + phosphate + 2 H(+). The protein operates within pyrimidine metabolism; CTP biosynthesis via de novo pathway; CTP from UDP: step 2/2. Allosterically activated by GTP, when glutamine is the substrate; GTP has no effect on the reaction when ammonia is the substrate. The allosteric effector GTP functions by stabilizing the protein conformation that binds the tetrahedral intermediate(s) formed during glutamine hydrolysis. Inhibited by the product CTP, via allosteric rather than competitive inhibition. In terms of biological role, catalyzes the ATP-dependent amination of UTP to CTP with either L-glutamine or ammonia as the source of nitrogen. Regulates intracellular CTP levels through interactions with the four ribonucleotide triphosphates. This Vibrio cholerae serotype O1 (strain ATCC 39541 / Classical Ogawa 395 / O395) protein is CTP synthase.